The following is a 70-amino-acid chain: Turripeptide OL179 (70 aa).

Residues 1-21 (MMAKQVVVLLALLLLLPIVTA) form the signal peptide. The propeptide occupies 22 to 32 (SMGDASGRTGR).

In terms of tissue distribution, expressed by the venom duct.

The protein resides in the secreted. Functionally, acts as a neurotoxin by inhibiting an ion channel. This chain is Turripeptide OL179, found in Iotyrris olangoensis (Sea snail).